We begin with the raw amino-acid sequence, 185 residues long: UPF0669 protein C6orf120 homolog (185 aa).

The first 23 residues, 1–23 (MAARWRRILIVFVAAQVLCLVNT), serve as a signal peptide directing secretion. A glycan (N-linked (GlcNAc...) asparagine) is linked at Asn-47.

The protein belongs to the UPF0669 family.

The protein resides in the secreted. In Gallus gallus (Chicken), this protein is UPF0669 protein C6orf120 homolog.